The sequence spans 170 residues: Adenine phosphoribosyltransferase (170 aa).

It belongs to the purine/pyrimidine phosphoribosyltransferase family. As to quaternary structure, homodimer.

It is found in the cytoplasm. The enzyme catalyses AMP + diphosphate = 5-phospho-alpha-D-ribose 1-diphosphate + adenine. The protein operates within purine metabolism; AMP biosynthesis via salvage pathway; AMP from adenine: step 1/1. Its function is as follows. Catalyzes a salvage reaction resulting in the formation of AMP, that is energically less costly than de novo synthesis. The chain is Adenine phosphoribosyltransferase from Geobacillus thermodenitrificans (strain NG80-2).